The sequence spans 428 residues: Mitochondrial distribution and morphology protein 12 (428 aa).

The 387-residue stretch at 1-387 (MSFDINWNQL…WPSWICIDMN (387 aa)) folds into the SMP-LTD domain. 2 disordered regions span residues 75–168 (VMNE…APPL) and 387–428 (NDDD…EAGE). Over residues 81–96 (NDSKDEHLKNHGDGIN) the composition is skewed to basic and acidic residues. Positions 106-133 (LDDEDEDDEDDDEDDEDEEEEDEDDYDD) are enriched in acidic residues. The span at 146–161 (LNFNENSTTPSANSFA) shows a compositional bias: polar residues. A compositionally biased stretch (acidic residues) spans 387–403 (NDDDDEEEEEEESEDND). Basic and acidic residues predominate over residues 412–428 (NDGKHGDGRTDETEAGE).

It belongs to the MDM12 family. In terms of assembly, component of the ER-mitochondria encounter structure (ERMES) or MDM complex, composed of MMM1, MDM10, MDM12 and MDM34. An MMM1 homodimer associates with one molecule of MDM12 on each side in a pairwise head-to-tail manner, and the SMP-LTD domains of MMM1 and MDM12 generate a continuous hydrophobic tunnel for phospholipid trafficking.

It is found in the mitochondrion outer membrane. Its subcellular location is the endoplasmic reticulum membrane. In terms of biological role, component of the ERMES/MDM complex, which serves as a molecular tether to connect the endoplasmic reticulum (ER) and mitochondria. Components of this complex are involved in the control of mitochondrial shape and protein biogenesis, and function in nonvesicular lipid trafficking between the ER and mitochondria. MDM12 is required for the interaction of the ER-resident membrane protein MMM1 and the outer mitochondrial membrane-resident beta-barrel protein MDM10. The MDM12-MMM1 subcomplex functions in the major beta-barrel assembly pathway that is responsible for biogenesis of all mitochondrial outer membrane beta-barrel proteins, and acts in a late step after the SAM complex. The MDM10-MDM12-MMM1 subcomplex further acts in the TOM40-specific pathway after the action of the MDM12-MMM1 complex. Essential for establishing and maintaining the structure of mitochondria and maintenance of mtDNA nucleoids. The polypeptide is Mitochondrial distribution and morphology protein 12 (Candida albicans (strain SC5314 / ATCC MYA-2876) (Yeast)).